The primary structure comprises 554 residues: Propanediol dehydratase large subunit (554 aa).

Belongs to the diol/glycerol dehydratase large subunit family. In terms of assembly, the propanediol dehydratase enzyme is a heterotrimeric complex composed of a large (PduC), a medium (PduD) and a small (PduE) subunit. It depends on adenosylcob(III)alamin as a cofactor.

The protein localises to the bacterial microcompartment. It carries out the reaction propane-1,2-diol = propanal + H2O. It functions in the pathway polyol metabolism; 1,2-propanediol degradation. Part of the PduCDE complex that catalyzes the dehydration of 1,2-propanediol (1,2-PD) to propionaldehyde. This subunit is directly targeted to the bacterial microcompartment (BMC). Its function is as follows. Expression of a cosmid containing the full 21-gene pdu operon in E.coli allows E.coli to grow on 1,2-propanediol (1,2-PD) with the appearance of BMCs in its cytoplasm. Functionally, the 1,2-PD-specific bacterial microcompartment (BMC) concentrates low levels of 1,2-PD catabolic enzymes, concentrates volatile reaction intermediates thus enhancing pathway flux and keeps the level of toxic, mutagenic propionaldehyde low. This Citrobacter freundii protein is Propanediol dehydratase large subunit.